The primary structure comprises 104 residues: Small ribosomal subunit protein uS10 (104 aa).

This sequence belongs to the universal ribosomal protein uS10 family. In terms of assembly, part of the 30S ribosomal subunit.

In terms of biological role, involved in the binding of tRNA to the ribosomes. The sequence is that of Small ribosomal subunit protein uS10 from Xanthomonas oryzae pv. oryzae (strain MAFF 311018).